A 108-amino-acid polypeptide reads, in one-letter code: Circadian clock oscillator protein KaiB (108 aa).

This sequence belongs to the KaiB family. In terms of assembly, may undergo a major conformational rearrangment; in the free state forms homooligomers. When bound to KaiC switches to a monomeric thioredoxin-fold (KaiB(fs)). The active oscillator complex is probably KaiC(6):KaiB(6).

In terms of biological role, component of the KaiBC clock protein complex, which constitutes the main circadian regulator in cyanobacteria; it may modify the ATPase activity of KaiC. Functionally, may be a metamorphic protein which reversibly switches between an inactive tetrameric fold and a rare, thioredoxin-like monomeric fold (KaiB(fs)). KaiB(fs) binds phospho-KaiC, and perhaps clock output effectors. The chain is Circadian clock oscillator protein KaiB from Prochlorococcus marinus (strain MIT 9515).